We begin with the raw amino-acid sequence, 313 residues long: Protein phosphatase PTC7 homolog fig (313 aa).

The 261-residue stretch at 47–307 folds into the PPM-type phosphatase domain; that stretch reads KEPLTDLQLR…DDITVILASL (261 aa). D83, G84, and D229 together coordinate Mn(2+).

The protein belongs to the PP2C family. Requires Mg(2+) as cofactor. It depends on Mn(2+) as a cofactor.

The catalysed reaction is O-phospho-L-seryl-[protein] + H2O = L-seryl-[protein] + phosphate. It catalyses the reaction O-phospho-L-threonyl-[protein] + H2O = L-threonyl-[protein] + phosphate. This Drosophila virilis (Fruit fly) protein is Protein phosphatase PTC7 homolog fig.